Reading from the N-terminus, the 1168-residue chain is Protein VARIATION IN COMPOUND TRIGGERED ROOT growth response (1168 aa).

Positions 10–171 (WVYDVFLSFS…EIANDVLAKL (162 aa)) constitute a TIR domain. Residue E85 is part of the active site. The NB-ARC domain maps to 187–452 (EDHIANMSVL…ACLFNHVKVR (266 aa)). LRR repeat units lie at residues 539–562 (TSKV…LFLD), 606–629 (LRNL…AMSF), 631–653 (CLKE…SKAT), 676–699 (LNKL…GFNL), 701–720 (SLDY…PEFA), 721–744 (TNIS…YFKN), 795–820 (LNNL…NLES), 839–865 (STNI…FFNL), 873–896 (CREL…SFSN), and 1065–1089 (NVPL…DWRS).

The protein belongs to the disease resistance NB-LRR family. As to quaternary structure, part of a nuclear protein complex made of VICTR, PAD4 and EDS1. Interacts (via TIR domain) with PAD4 and EDS1.

It localises to the cytoplasm. The protein resides in the nucleus. It catalyses the reaction NAD(+) + H2O = ADP-D-ribose + nicotinamide + H(+). Disease resistance protein of the TIR-NB-LRR-type. Part of the RPS6 locus that contains a cluster of several paralogous disease resistance (R) genes. Resistance proteins guard the plant against pathogens that contain an appropriate avirulence protein via an indirect interaction with this avirulence protein. That triggers a defense system including the hypersensitive response, which restricts the pathogen growth. Required for [5-(3,4-dichlorophenyl)furan-2-yl]-piperidine-1-ylmethanethione-(DFPM-) induced root growth arrest due to reduced number of meristem cells in the division zone of the primary root and inhibition of abscisic acid- (ABA-) induced stomatal closing. This Arabidopsis thaliana (Mouse-ear cress) protein is Protein VARIATION IN COMPOUND TRIGGERED ROOT growth response (VICTR).